Reading from the N-terminus, the 282-residue chain is Halorhodopsin (282 aa).

The Extracellular portion of the chain corresponds to 1-29 (MMETAADALASGTVPLEMTQTQIFEAIQG). Residues 30–55 (DTLLASSLWINIALAGLSILLFVYMG) form a helical membrane-spanning segment. Residues 56–61 (RNLEDP) are Cytoplasmic-facing. The helical transmembrane segment at 62 to 85 (RAQLIFVATLMVPLVSISSYTGLV) threads the bilayer. Topologically, residues 86–109 (SGLTVSFLEMPAGHALAGQEVLTP) are extracellular. The helical transmembrane segment at 110–131 (WGRYLTWALSTPMILVALGLLA) threads the bilayer. Over 132–134 (GSN) the chain is Cytoplasmic. Residues 135-158 (ATKLFTAVTADIGMCVTGLAAALT) traverse the membrane as a helical segment. Topologically, residues 159 to 161 (TSS) are extracellular. A helical membrane pass occupies residues 162–184 (YLLRWVWYVISCAFFVVVLYVLL). Residues 185–196 (AEWAEDAEVAGT) are Cytoplasmic-facing. A helical membrane pass occupies residues 197 to 220 (AEIFNTLKLLTVVLWLGYPIFWAL). At 221–229 (GAEGLAVLD) the chain is on the extracellular side. The helical transmembrane segment at 230 to 258 (VAVTSWAYSGMDIVAKYLFAFLLLRWVVD) threads the bilayer. Residue Lys245 is modified to N6-(retinylidene)lysine. Residues 259–282 (NERTVAGMAAGLGAPLARCAPADD) are Cytoplasmic-facing.

It belongs to the archaeal/bacterial/fungal opsin family.

It is found in the cell membrane. Functionally, light-driven chloride pump. The polypeptide is Halorhodopsin (hop) (Halorubrum sodomense).